We begin with the raw amino-acid sequence, 479 residues long: uncharacterized protein (479 aa).

Positions 180 to 203 (LGGEHSDSTNTELANPSSTTTRIT) are disordered. A compositionally biased stretch (polar residues) spans 187–202 (STNTELANPSSTTTRI). The 223-residue stretch at 240-462 (PGTTPEVVSY…LKPLVDAGYS (223 aa)) folds into the PE-PPE domain.

Belongs to the mycobacterial PPE family.

This is an uncharacterized protein from Mycobacterium tuberculosis (strain CDC 1551 / Oshkosh).